Reading from the N-terminus, the 266-residue chain is 15-hydroxyprostaglandin dehydrogenase [NAD(+)] (266 aa).

NAD(+)-binding positions include 12 to 20 (GAAQGIGRA), 36 to 37 (DW), 63 to 65 (CDV), and asparagine 91. Substrate contacts are provided by serine 138 and glutamine 148. Tyrosine 151 functions as the Proton acceptor in the catalytic mechanism. Residues 151–155 (YCASK) and 186–188 (VNT) each bind NAD(+).

It belongs to the short-chain dehydrogenases/reductases (SDR) family. In terms of assembly, homodimer. As to expression, detected in colon epithelium (at protein level).

The protein localises to the cytoplasm. The catalysed reaction is prostaglandin E2 + NAD(+) = 15-oxoprostaglandin E2 + NADH + H(+). It catalyses the reaction (15S)-hydroxy-(5Z,8Z,11Z,13E)-eicosatetraenoate + NAD(+) = 15-oxo-(5Z,8Z,11Z,13E)-eicosatetraenoate + NADH + H(+). It carries out the reaction (11R)-hydroxy-(5Z,8Z,12E,14Z)-eicosatetraenoate + NAD(+) = 11-oxo-(5Z,8Z,12E,14Z)-eicosatetraenoate + NADH + H(+). The enzyme catalyses lipoxin A4 + NAD(+) = 15-oxo-(5S,6R)-dihydroxy-(7E,9E,11Z,13E)-eicosatetraenoate + NADH + H(+). The catalysed reaction is 15-oxo-(5S,6R)-dihydroxy-(7E,9E,11Z)-eicosatrienoate + NADH + H(+) = (5S,6R,15S)-trihydroxy-(7E,9E,11Z)-eicosatrienoate + NAD(+). It catalyses the reaction prostaglandin A1 + NAD(+) = 15-oxo-prostaglandin A1 + NADH + H(+). It carries out the reaction prostaglandin E1 + NAD(+) = 15-oxoprostaglandin E1 + NADH + H(+). The enzyme catalyses 14-hydroxy-(4Z,7Z,10Z,12E,16Z,19Z)-docosahexaenoate + NAD(+) = 14-oxo-(4Z,7Z,10Z,12E,16Z,19Z)-docosahexaenoate + NADH + H(+). The catalysed reaction is resolvin E1 + NAD(+) = 18-oxo-resolvin E1 + NADH + H(+). It catalyses the reaction resolvin D1 + NAD(+) = 8-oxoresolvin D1 + NADH + H(+). It carries out the reaction resolvin D1 + NAD(+) = 17-oxoresolvin D1 + NADH + H(+). The enzyme catalyses resolvin D2 + NAD(+) = 7-oxoresolvin D2 + NADH + H(+). The catalysed reaction is resolvin D2 + NAD(+) = 16-oxoresolvin D2 + NADH + H(+). Catalyzes the NAD-dependent dehydrogenation (oxidation) of a broad array of hydroxylated polyunsaturated fatty acids (mainly eicosanoids and docosanoids, including prostaglandins, lipoxins and resolvins), yielding their corresponding keto (oxo) metabolites. Decreases the levels of the pro-proliferative prostaglandins such as prostaglandin E2 (whose activity is increased in cancer because of an increase in the expression of cyclooxygenase 2) and generates oxo-fatty acid products that can profoundly influence cell function by abrogating pro-inflammatory cytokine expression. Converts resolvins E1, D1 and D2 to their oxo products, which represents a mode of resolvin inactivation. Resolvin E1 plays important roles during the resolution phase of acute inflammation, while resolvins D1 and D2 have a unique role in obesity-induced adipose inflammation. The protein is 15-hydroxyprostaglandin dehydrogenase [NAD(+)] of Homo sapiens (Human).